The primary structure comprises 147 residues: Acidic phospholipase A2 S9-53F (147 aa).

The first 19 residues, 1–19 (MYPAHLLVLLAVCVSLLGA), serve as a signal peptide directing secretion. Residues 20-27 (SDIPPQPL) constitute a propeptide that is removed on maturation. Cystine bridges form between Cys38-Cys99, Cys54-Cys146, Cys56-Cys72, Cys71-Cys127, Cys78-Cys120, Cys88-Cys113, and Cys106-Cys118. Tyr55, Gly57, and Gly59 together coordinate Ca(2+). The active site involves His75. Asp76 serves as a coordination point for Ca(2+). The active site involves Asp121.

It belongs to the phospholipase A2 family. Group I subfamily. D49 sub-subfamily. Ca(2+) is required as a cofactor. In terms of tissue distribution, expressed by the venom gland.

The protein localises to the secreted. The enzyme catalyses a 1,2-diacyl-sn-glycero-3-phosphocholine + H2O = a 1-acyl-sn-glycero-3-phosphocholine + a fatty acid + H(+). Its function is as follows. Snake venom phospholipase A2 (PLA2) that inhibits collagen-induced platelet aggregation. PLA2 catalyzes the calcium-dependent hydrolysis of the 2-acyl groups in 3-sn-phosphoglycerides. The sequence is that of Acidic phospholipase A2 S9-53F from Austrelaps superbus (Lowland copperhead snake).